A 552-amino-acid polypeptide reads, in one-letter code: FERRY endosomal RAB5 effector complex subunit 3 (552 aa).

The segment at 383 to 403 (LKESLDSGNQNGGNDDKTKNA) is disordered.

As to quaternary structure, component of the FERRY complex composed of five subunits, TBCK, PPP1R21, FERRY3, CRYZL1 and GATD1 with a ratio of 1:2:1:2:4, respectively.

It is found in the cytoplasm. The protein localises to the early endosome. In terms of biological role, component of the FERRY complex (Five-subunit Endosomal Rab5 and RNA/ribosome intermediary). The FERRY complex directly interacts with mRNAs and RAB5A, and functions as a RAB5A effector involved in the localization and the distribution of specific mRNAs most likely by mediating their endosomal transport. The complex recruits mRNAs and ribosomes to early endosomes through direct mRNA-interaction. Plays a role in mast cell degranulation. The chain is FERRY endosomal RAB5 effector complex subunit 3 from Pongo abelii (Sumatran orangutan).